A 140-amino-acid chain; its full sequence is Transcription antitermination protein NusB (140 aa).

Belongs to the NusB family.

Its function is as follows. Involved in transcription antitermination. Required for transcription of ribosomal RNA (rRNA) genes. Binds specifically to the boxA antiterminator sequence of the ribosomal RNA (rrn) operons. In Elusimicrobium minutum (strain Pei191), this protein is Transcription antitermination protein NusB.